We begin with the raw amino-acid sequence, 394 residues long: Phosphopentomutase (394 aa).

Residues Asp-14, Asp-287, His-292, Asp-328, His-329, and His-340 each contribute to the Mn(2+) site.

The protein belongs to the phosphopentomutase family. The cofactor is Mn(2+).

The protein resides in the cytoplasm. It carries out the reaction 2-deoxy-alpha-D-ribose 1-phosphate = 2-deoxy-D-ribose 5-phosphate. The catalysed reaction is alpha-D-ribose 1-phosphate = D-ribose 5-phosphate. It functions in the pathway carbohydrate degradation; 2-deoxy-D-ribose 1-phosphate degradation; D-glyceraldehyde 3-phosphate and acetaldehyde from 2-deoxy-alpha-D-ribose 1-phosphate: step 1/2. Isomerase that catalyzes the conversion of deoxy-ribose 1-phosphate (dRib-1-P) and ribose 1-phosphate (Rib-1-P) to deoxy-ribose 5-phosphate (dRib-5-P) and ribose 5-phosphate (Rib-5-P), respectively. The protein is Phosphopentomutase of Listeria monocytogenes serotype 4b (strain CLIP80459).